The following is a 303-amino-acid chain: Ribosomal protein L11 methyltransferase (303 aa).

The S-adenosyl-L-methionine site is built by threonine 146, glycine 167, aspartate 189, and asparagine 236.

This sequence belongs to the methyltransferase superfamily. PrmA family.

The protein resides in the cytoplasm. The enzyme catalyses L-lysyl-[protein] + 3 S-adenosyl-L-methionine = N(6),N(6),N(6)-trimethyl-L-lysyl-[protein] + 3 S-adenosyl-L-homocysteine + 3 H(+). In terms of biological role, methylates ribosomal protein L11. The sequence is that of Ribosomal protein L11 methyltransferase from Acinetobacter baylyi (strain ATCC 33305 / BD413 / ADP1).